We begin with the raw amino-acid sequence, 298 residues long: Ethanolamine ammonia-lyase small subunit (298 aa).

The adenosylcob(III)alamin site is built by Val210, Glu231, and Cys261.

It belongs to the EutC family. The basic unit is a heterodimer which dimerizes to form tetramers. The heterotetramers trimerize; 6 large subunits form a core ring with 6 small subunits projecting outwards. Adenosylcob(III)alamin is required as a cofactor.

The protein resides in the bacterial microcompartment. The enzyme catalyses ethanolamine = acetaldehyde + NH4(+). It participates in amine and polyamine degradation; ethanolamine degradation. In terms of biological role, catalyzes the deamination of various vicinal amino-alcohols to oxo compounds. Allows this organism to utilize ethanolamine as the sole source of nitrogen and carbon in the presence of external vitamin B12. This is Ethanolamine ammonia-lyase small subunit from Salmonella agona (strain SL483).